The following is a 47-amino-acid chain: Potassium channel toxin gamma-KTx 5.1 (47 aa).

Disulfide bonds link Cys5–Cys23, Cys11–Cys34, Cys20–Cys39, and Cys24–Cys41.

It belongs to the ergtoxin family. Gamma-KTx 5 subfamily. As to expression, expressed by the venom gland.

The protein localises to the secreted. Its function is as follows. Reversibly blocks Kv11/ERG potassium channels. This Centruroides sculpturatus (Arizona bark scorpion) protein is Potassium channel toxin gamma-KTx 5.1.